The following is a 331-amino-acid chain: Ferredoxin--NADP reductase 2 (331 aa).

FAD is bound by residues glutamate 37, glutamine 45, tyrosine 50, valine 90, phenylalanine 124, aspartate 286, and threonine 327.

The protein belongs to the ferredoxin--NADP reductase type 2 family. As to quaternary structure, homodimer. Requires FAD as cofactor.

It catalyses the reaction 2 reduced [2Fe-2S]-[ferredoxin] + NADP(+) + H(+) = 2 oxidized [2Fe-2S]-[ferredoxin] + NADPH. The sequence is that of Ferredoxin--NADP reductase 2 from Listeria monocytogenes serovar 1/2a (strain ATCC BAA-679 / EGD-e).